Reading from the N-terminus, the 256-residue chain is Imidazole glycerol phosphate synthase subunit HisF (256 aa).

Catalysis depends on residues Asp-12 and Asp-131.

Belongs to the HisA/HisF family. Heterodimer of HisH and HisF.

The protein localises to the cytoplasm. It catalyses the reaction 5-[(5-phospho-1-deoxy-D-ribulos-1-ylimino)methylamino]-1-(5-phospho-beta-D-ribosyl)imidazole-4-carboxamide + L-glutamine = D-erythro-1-(imidazol-4-yl)glycerol 3-phosphate + 5-amino-1-(5-phospho-beta-D-ribosyl)imidazole-4-carboxamide + L-glutamate + H(+). The protein operates within amino-acid biosynthesis; L-histidine biosynthesis; L-histidine from 5-phospho-alpha-D-ribose 1-diphosphate: step 5/9. IGPS catalyzes the conversion of PRFAR and glutamine to IGP, AICAR and glutamate. The HisF subunit catalyzes the cyclization activity that produces IGP and AICAR from PRFAR using the ammonia provided by the HisH subunit. This is Imidazole glycerol phosphate synthase subunit HisF from Renibacterium salmoninarum (strain ATCC 33209 / DSM 20767 / JCM 11484 / NBRC 15589 / NCIMB 2235).